Consider the following 694-residue polypeptide: Frizzled-8 (694 aa).

The N-terminal stretch at 1 to 27 is a signal peptide; it reads MEWGYLLEVTSLLAALALLQRSSGAAA. Residues 28 to 275 lie on the Extracellular side of the membrane; the sequence is ASAKELACQE…NPFFSQDERA (248 aa). One can recognise an FZ domain in the interval 30–151; the sequence is AKELACQEIT…GNPDTLCMDY (122 aa). 5 disulfides stabilise this stretch: C35/C96, C43/C89, C80/C118, C107/C148, and C111/C135. Residue N49 is glycosylated (N-linked (GlcNAc...) asparagine). Residue 71-78 participates in hexadecanoate binding; that stretch reads QFWPLVEI. Residues 95–100 are wnt-binding; it reads ICLEDY. A wnt-binding region spans residues 147-152; the sequence is LCMDYN. N152 is a glycosylation site (N-linked (GlcNAc...) asparagine). The disordered stretch occupies residues 155-226; that stretch reads DLTTAAPSPP…KARPPGGGAA (72 aa). A compositionally biased stretch (pro residues) spans 161–175; it reads PSPPRRLPPPPPGEQ. The span at 176-186 shows a compositional bias: low complexity; that stretch reads PPSGSGHGRPP. Residues 210–225 are compositionally biased toward gly residues; the sequence is RGGGGGGKARPPGGGA. The chain crosses the membrane as a helical span at residues 276–296; sequence FTVFWIGLWSVLCFVSTFATV. Residues 297 to 312 lie on the Cytoplasmic side of the membrane; the sequence is STFLIDMERFKYPERP. The chain crosses the membrane as a helical span at residues 313-333; that stretch reads IIFLSACYLFVSVGYLVRLVA. At 334–396 the chain is on the extracellular side; that stretch reads GHEKVACSGG…RYETTGPALC (63 aa). A helical membrane pass occupies residues 397–417; the sequence is TVVFLLVYFFGMASSIWWVIL. The Cytoplasmic portion of the chain corresponds to 418–439; it reads SLTWFLAAGMKWGNEAIAGYSQ. A helical membrane pass occupies residues 440-460; sequence YFHLAAWLVPSVKSIAVLALS. Over 461 to 483 the chain is Extracellular; the sequence is SVDGDPVAGICYVGNQSLDNLRG. N475 is a glycosylation site (N-linked (GlcNAc...) asparagine). A helical membrane pass occupies residues 484 to 504; sequence FVLAPLVIYLFIGTMFLLAGF. Over 505–532 the chain is Cytoplasmic; it reads VSLFRIRSVIKQQDGPTKTHKLEKLMIR. Residues 533–553 form a helical membrane-spanning segment; the sequence is LGLFTVLYTVPAAVVVACLFY. At 554-584 the chain is on the extracellular side; it reads EQHNRPRWEATHNCPCLRDLQPDQARRPDYA. Residues 585–605 form a helical membrane-spanning segment; it reads VFMLKYFMCLVVGITSGVWVW. At 606–694 the chain is on the cytoplasmic side; that stretch reads SGKTLESWRS…YPKQMPLSQV (89 aa). The Lys-Thr-X-X-X-Trp motif, mediates interaction with the PDZ domain of Dvl family members signature appears at 608–613; that stretch reads KTLESW. Positions 648 to 664 are enriched in gly residues; it reads GGGGPGGGGGPGGGGGS. Residues 648–668 are disordered; the sequence is GGGGPGGGGGPGGGGGSLYSD. Residues 692-694 carry the PDZ-binding motif; the sequence is SQV.

This sequence belongs to the G-protein coupled receptor Fz/Smo family. As to quaternary structure, component of a Wnt-signaling complex that contains a WNT protein, a FZD protein and LRP5 or LRP6. Interacts directly with LRP5 or LRP6; the interaction is promoted by Wnt-binding and signaling and inhibited by DKK1. Interacts with GPOC, RSPO1 and RSPO3. Interacts with glypican GPC3. Post-translationally, ubiquitinated by ZNRF3, leading to its degradation by the proteasome. In terms of tissue distribution, most abundant in fetal kidney, followed by brain and lung. In adult tissues, expressed in kidney, heart, pancreas and skeletal muscle.

The protein localises to the membrane. It is found in the golgi apparatus. The protein resides in the cell membrane. Receptor for Wnt proteins. Component of the Wnt-Fzd-LRP5-LRP6 complex that triggers beta-catenin signaling through inducing aggregation of receptor-ligand complexes into ribosome-sized signalosomes. The beta-catenin canonical signaling pathway leads to the activation of disheveled proteins, inhibition of GSK-3 kinase, nuclear accumulation of beta-catenin and activation of Wnt target genes. A second signaling pathway involving PKC and calcium fluxes has been seen for some family members, but it is not yet clear if it represents a distinct pathway or if it can be integrated in the canonical pathway, as PKC seems to be required for Wnt-mediated inactivation of GSK-3 kinase. Both pathways seem to involve interactions with G-proteins. May be involved in transduction and intercellular transmission of polarity information during tissue morphogenesis and/or in differentiated tissues. Coreceptor along with RYK of Wnt proteins, such as WNT1. This Homo sapiens (Human) protein is Frizzled-8 (FZD8).